We begin with the raw amino-acid sequence, 332 residues long: Ketol-acid reductoisomerase (NADP(+)) (332 aa).

The 181-residue stretch at 2 to 182 (AKVYIDKDAS…GATRAGVIET (181 aa)) folds into the KARI N-terminal Rossmann domain. NADP(+) contacts are provided by residues 25-28 (YGSQ), Ser-53, and 83-86 (DMVQ). The active site involves His-108. Residue Gly-134 participates in NADP(+) binding. In terms of domain architecture, KARI C-terminal knotted spans 183 to 328 (TFKEETETDL…RQIREISLRG (146 aa)). Asp-191, Glu-195, Glu-227, and Glu-231 together coordinate Mg(2+). Ser-252 contributes to the substrate binding site.

This sequence belongs to the ketol-acid reductoisomerase family. Requires Mg(2+) as cofactor.

It carries out the reaction (2R)-2,3-dihydroxy-3-methylbutanoate + NADP(+) = (2S)-2-acetolactate + NADPH + H(+). The enzyme catalyses (2R,3R)-2,3-dihydroxy-3-methylpentanoate + NADP(+) = (S)-2-ethyl-2-hydroxy-3-oxobutanoate + NADPH + H(+). Its pathway is amino-acid biosynthesis; L-isoleucine biosynthesis; L-isoleucine from 2-oxobutanoate: step 2/4. It participates in amino-acid biosynthesis; L-valine biosynthesis; L-valine from pyruvate: step 2/4. Involved in the biosynthesis of branched-chain amino acids (BCAA). Catalyzes an alkyl-migration followed by a ketol-acid reduction of (S)-2-acetolactate (S2AL) to yield (R)-2,3-dihydroxy-isovalerate. In the isomerase reaction, S2AL is rearranged via a Mg-dependent methyl migration to produce 3-hydroxy-3-methyl-2-ketobutyrate (HMKB). In the reductase reaction, this 2-ketoacid undergoes a metal-dependent reduction by NADPH to yield (R)-2,3-dihydroxy-isovalerate. The polypeptide is Ketol-acid reductoisomerase (NADP(+)) (Sulfurisphaera tokodaii (strain DSM 16993 / JCM 10545 / NBRC 100140 / 7) (Sulfolobus tokodaii)).